Here is a 249-residue protein sequence, read N- to C-terminus: Isoprenyl transferase (249 aa).

Residue Asp-25 is part of the active site. Asp-25 serves as a coordination point for Mg(2+). Substrate contacts are provided by residues 26 to 29, Trp-30, Arg-38, His-42, and 70 to 72; these read GNGR and STE. Catalysis depends on Asn-73, which acts as the Proton acceptor. Substrate contacts are provided by residues Trp-74, Arg-76, Arg-197, and 203-205; that span reads RLS. Glu-216 serves as a coordination point for Mg(2+).

Belongs to the UPP synthase family. Homodimer. Mg(2+) is required as a cofactor.

Catalyzes the condensation of isopentenyl diphosphate (IPP) with allylic pyrophosphates generating different type of terpenoids. This Streptococcus mutans serotype c (strain ATCC 700610 / UA159) protein is Isoprenyl transferase.